A 117-amino-acid polypeptide reads, in one-letter code: Ribosome-binding factor A (117 aa).

Belongs to the RbfA family. As to quaternary structure, monomer. Binds 30S ribosomal subunits, but not 50S ribosomal subunits or 70S ribosomes.

It localises to the cytoplasm. One of several proteins that assist in the late maturation steps of the functional core of the 30S ribosomal subunit. Associates with free 30S ribosomal subunits (but not with 30S subunits that are part of 70S ribosomes or polysomes). Required for efficient processing of 16S rRNA. May interact with the 5'-terminal helix region of 16S rRNA. The sequence is that of Ribosome-binding factor A from Leptospira interrogans serogroup Icterohaemorrhagiae serovar Lai (strain 56601).